The following is a 311-amino-acid chain: 4-hydroxy-tetrahydrodipicolinate synthase (311 aa).

Threonine 51 is a binding site for pyruvate. Tyrosine 140 (proton donor/acceptor) is an active-site residue. Residue lysine 168 is the Schiff-base intermediate with substrate of the active site. Isoleucine 209 serves as a coordination point for pyruvate.

The protein belongs to the DapA family. Homotetramer; dimer of dimers.

It is found in the cytoplasm. It catalyses the reaction L-aspartate 4-semialdehyde + pyruvate = (2S,4S)-4-hydroxy-2,3,4,5-tetrahydrodipicolinate + H2O + H(+). Its pathway is amino-acid biosynthesis; L-lysine biosynthesis via DAP pathway; (S)-tetrahydrodipicolinate from L-aspartate: step 3/4. Catalyzes the condensation of (S)-aspartate-beta-semialdehyde [(S)-ASA] and pyruvate to 4-hydroxy-tetrahydrodipicolinate (HTPA). The polypeptide is 4-hydroxy-tetrahydrodipicolinate synthase (Streptococcus pneumoniae (strain Taiwan19F-14)).